Consider the following 137-residue polypeptide: Nucleoside diphosphate kinase (137 aa).

Residues Lys11, Phe59, Arg87, Thr93, Arg104, and Asn114 each coordinate ATP. The active-site Pros-phosphohistidine intermediate is the His117.

Belongs to the NDK family. In terms of assembly, homotetramer. The cofactor is Mg(2+).

The protein localises to the cytoplasm. The catalysed reaction is a 2'-deoxyribonucleoside 5'-diphosphate + ATP = a 2'-deoxyribonucleoside 5'-triphosphate + ADP. The enzyme catalyses a ribonucleoside 5'-diphosphate + ATP = a ribonucleoside 5'-triphosphate + ADP. Its function is as follows. Major role in the synthesis of nucleoside triphosphates other than ATP. The ATP gamma phosphate is transferred to the NDP beta phosphate via a ping-pong mechanism, using a phosphorylated active-site intermediate. The chain is Nucleoside diphosphate kinase from Parafrankia sp. (strain EAN1pec).